The chain runs to 116 residues: Venom nerve growth factor (116 aa).

Intrachain disulfides connect Cys14/Cys78, Cys56/Cys106, and Cys66/Cys108.

It belongs to the NGF-beta family. Homodimer; non-covalently linked. Post-translationally, not glycosylated. Expressed by the venom gland.

It localises to the secreted. Nerve growth factor is important for the development and maintenance of the sympathetic and sensory nervous systems. It stimulates division and differentiation of sympathetic and embryonic sensory neurons as well as basal forebrain cholinergic neurons in the brain. Its relevance in the snake venom is not clear. However, it has been shown to inhibit metalloproteinase-dependent proteolysis of platelet glycoprotein Ib alpha, suggesting a metalloproteinase inhibition to prevent metalloprotease autodigestion and/or protection against prey proteases. Binds a lipid between the two protein chains in the homodimer. The lipid-bound form promotes histamine relase from mouse mast cells, contrary to the lipid-free form. In Naja naja (Indian cobra), this protein is Venom nerve growth factor.